Here is a 470-residue protein sequence, read N- to C-terminus: Probable V-type proton ATPase subunit H 2 (470 aa).

Belongs to the V-ATPase H subunit family. As to quaternary structure, V-ATPase is a heteromultimeric enzyme made up of two complexes: the ATP-hydrolytic V1 complex and the proton translocation V0 complex. The V1 complex consists of three catalytic AB heterodimers that form a heterohexamer, three peripheral stalks each consisting of EG heterodimers, one central rotor including subunits D and F, and the regulatory subunits C and H. The proton translocation complex V0 consists of the proton transport subunit a, a ring of proteolipid subunits c9c'', rotary subunit d, subunits e and f, and the accessory subunits vah-19/Ac45 and vah-20/PRR.

Its function is as follows. Subunit of the V1 complex of vacuolar(H+)-ATPase (V-ATPase), a multisubunit enzyme composed of a peripheral complex (V1) that hydrolyzes ATP and a membrane integral complex (V0) that translocates protons. V-ATPase is responsible for acidifying and maintaining the pH of intracellular compartments and in some cell types, is targeted to the plasma membrane, where it is responsible for acidifying the extracellular environment. Subunit H is essential for V-ATPase activity, but not for the assembly of the complex. The protein is Probable V-type proton ATPase subunit H 2 of Caenorhabditis elegans.